We begin with the raw amino-acid sequence, 144 residues long: Large ribosomal subunit protein uL13 (144 aa).

Belongs to the universal ribosomal protein uL13 family. As to quaternary structure, part of the 50S ribosomal subunit.

In terms of biological role, this protein is one of the early assembly proteins of the 50S ribosomal subunit, although it is not seen to bind rRNA by itself. It is important during the early stages of 50S assembly. This Mesomycoplasma hyopneumoniae (strain 232) (Mycoplasma hyopneumoniae) protein is Large ribosomal subunit protein uL13.